A 215-amino-acid polypeptide reads, in one-letter code: Flavin-dependent thymidylate synthase (215 aa).

Positions 1-215 (MDVRFISLTK…FPTVAAALEW (215 aa)) constitute a ThyX domain. Residues Ser56, 79-81 (RHR), and Glu87 contribute to the FAD site. DUMP contacts are provided by residues 76-79 (QILR), 87-91 (EFSLR), and Arg155. Residues 79–89 (RHRSFSFQEFS) carry the ThyX motif motif. Position 177 (His177) interacts with FAD. Arg182 is a dUMP binding site. Arg182 functions as the Involved in ionization of N3 of dUMP, leading to its activation in the catalytic mechanism.

It belongs to the thymidylate synthase ThyX family. As to quaternary structure, homotetramer. The cofactor is FAD.

It carries out the reaction dUMP + (6R)-5,10-methylene-5,6,7,8-tetrahydrofolate + NADPH + H(+) = dTMP + (6S)-5,6,7,8-tetrahydrofolate + NADP(+). Its pathway is pyrimidine metabolism; dTTP biosynthesis. Catalyzes the reductive methylation of 2'-deoxyuridine-5'-monophosphate (dUMP) to 2'-deoxythymidine-5'-monophosphate (dTMP) while utilizing 5,10-methylenetetrahydrofolate (mTHF) as the methyl donor, and NADPH and FADH(2) as the reductant. The polypeptide is Flavin-dependent thymidylate synthase (Synechocystis sp. (strain ATCC 27184 / PCC 6803 / Kazusa)).